The following is a 201-amino-acid chain: Imidazole glycerol phosphate synthase subunit HisH (201 aa).

The Glutamine amidotransferase type-1 domain maps to 1–201; it reads MVFIADYGAG…LQVLKNFAEF (201 aa). C79 serves as the catalytic Nucleophile. Catalysis depends on residues H183 and E185.

Heterodimer of HisH and HisF.

The protein resides in the cytoplasm. The enzyme catalyses 5-[(5-phospho-1-deoxy-D-ribulos-1-ylimino)methylamino]-1-(5-phospho-beta-D-ribosyl)imidazole-4-carboxamide + L-glutamine = D-erythro-1-(imidazol-4-yl)glycerol 3-phosphate + 5-amino-1-(5-phospho-beta-D-ribosyl)imidazole-4-carboxamide + L-glutamate + H(+). The catalysed reaction is L-glutamine + H2O = L-glutamate + NH4(+). It functions in the pathway amino-acid biosynthesis; L-histidine biosynthesis; L-histidine from 5-phospho-alpha-D-ribose 1-diphosphate: step 5/9. In terms of biological role, IGPS catalyzes the conversion of PRFAR and glutamine to IGP, AICAR and glutamate. The HisH subunit catalyzes the hydrolysis of glutamine to glutamate and ammonia as part of the synthesis of IGP and AICAR. The resulting ammonia molecule is channeled to the active site of HisF. In Chlorobaculum tepidum (strain ATCC 49652 / DSM 12025 / NBRC 103806 / TLS) (Chlorobium tepidum), this protein is Imidazole glycerol phosphate synthase subunit HisH.